The sequence spans 823 residues: Zygotic DNA replication licensing factor mcm6 (823 aa).

The segment at 159 to 186 (CLDCQTLVRDVEQQFKYTQPSICRNPVC) adopts a C4-type zinc-finger fold. An MCM domain is found at 347–554 (LYHNLCTSLF…TDYAIARRIV (208 aa)). Residue 397 to 404 (GDPSTAKS) participates in ATP binding. An Arginine finger motif is present at residues 529-532 (SRFD). The interval 666–713 (NLDQEDEHEAEEEPQEVINGDASVPSGVNGHVNGMNGHAEEPNAATPK) is disordered. Residues 667-680 (LDQEDEHEAEEEPQ) are compositionally biased toward acidic residues. Residues 692 to 702 (GVNGHVNGMNG) are compositionally biased toward low complexity.

Belongs to the MCM family. Component of the mcm2-7 complex (RLF-M). The complex forms a toroidal hexameric ring with the proposed subunit order mcm2-mcm6-mcm4-mcm7-mcm3-mcm5. Begins to associate with zmcm3, mcm4 and mcm7 into mcm complexes at the neurula stage.

The protein resides in the nucleus. It carries out the reaction ATP + H2O = ADP + phosphate + H(+). Its function is as follows. Acts as a component of the mcm2-7 complex (mcm complex) which is the putative replicative helicase essential for 'once per cell cycle' DNA replication initiation and elongation in eukaryotic cells. The active ATPase sites in the mcm2-7 ring are formed through the interaction surfaces of two neighboring subunits such that a critical structure of a conserved arginine finger motif is provided in trans relative to the ATP-binding site of the Walker A box of the adjacent subunit. The six ATPase active sites, however, are likely to contribute differentially to the complex helicase activity. The existence of maternal and zygotic forms of mcm3 and mcm6 suggests that specific forms of mcm2-7 complexes may be used during different stages of development. May replace mmcm6 in the mcm2-7 complex. This Xenopus tropicalis (Western clawed frog) protein is Zygotic DNA replication licensing factor mcm6.